Consider the following 337-residue polypeptide: DNA-directed RNA polymerase subunit alpha (337 aa).

Positions 1 to 233 (MIQKNWQELI…DQLSIFVNFE (233 aa)) are alpha N-terminal domain (alpha-NTD). An alpha C-terminal domain (alpha-CTD) region spans residues 249 to 337 (FNPVLLKKVD…DLAKRYEDQY (89 aa)).

This sequence belongs to the RNA polymerase alpha chain family. As to quaternary structure, homodimer. The RNAP catalytic core consists of 2 alpha, 1 beta, 1 beta' and 1 omega subunit. When a sigma factor is associated with the core the holoenzyme is formed, which can initiate transcription.

It catalyses the reaction RNA(n) + a ribonucleoside 5'-triphosphate = RNA(n+1) + diphosphate. DNA-dependent RNA polymerase catalyzes the transcription of DNA into RNA using the four ribonucleoside triphosphates as substrates. In Brucella canis (strain ATCC 23365 / NCTC 10854 / RM-666), this protein is DNA-directed RNA polymerase subunit alpha.